Here is a 562-residue protein sequence, read N- to C-terminus: Alpha-1D adrenergic receptor (562 aa).

Over 1-90 (MTFRDILSVT…VGGLVVSAQG (90 aa)) the chain is Extracellular. 2 disordered regions span residues 13 to 44 (GPRASSSTGGSGAGGGAGTVGPEGPAVGGVPG) and 50 to 69 (AVVGTGSGEDNQSSTAEAGA). Over residues 21–44 (GGSGAGGGAGTVGPEGPAVGGVPG) the composition is skewed to gly residues. 2 N-linked (GlcNAc...) asparagine glycosylation sites follow: N60 and N76. A helical transmembrane segment spans residues 91–115 (VGVGVFLAAFILTAVAGNLLVILSV). Residues 116–127 (ACNRHLQTVTNY) are Cytoplasmic-facing. A helical membrane pass occupies residues 128–153 (FIVNLAVADLLLSAAVLPFSATMEVL). Residues 154–163 (GFWPFGRTFC) lie on the Extracellular side of the membrane. A helical membrane pass occupies residues 164-186 (DVWAAVDVLCCTASILSLCTISV). At 187–207 (DRYVGVRHSLKYPAIMTERKA) the chain is on the cytoplasmic side. A helical transmembrane segment spans residues 208 to 232 (AAILALLWAVALVVSVGPLLGWKEP). The Extracellular portion of the chain corresponds to 233-245 (VPPDERFCGITEE). Residues 246–269 (VGYAIFSSVCSFYLPMAVIVVMYC) traverse the membrane as a helical segment. Topologically, residues 270–342 (RVYVVARSTT…KFSREKKAAK (73 aa)) are cytoplasmic. The chain crosses the membrane as a helical span at residues 343–367 (TLAIVVGVFVLCWFPFFFVLPLGSL). The Extracellular segment spans residues 368 to 374 (FPQLKPS). The helical transmembrane segment at 375 to 399 (EGVFKVIFWLGYFNSCVNPLIYPCS) threads the bilayer. The Cytoplasmic portion of the chain corresponds to 400–562 (SREFKRAFLR…DLSNLRETDI (163 aa)). C413 carries the S-palmitoyl cysteine lipid modification. A disordered region spans residues 444–472 (QPAHRTPRGSPSPHCTPRPGLRRHAGGAG).

This sequence belongs to the G-protein coupled receptor 1 family. Adrenergic receptor subfamily. ADRA1D sub-subfamily. In terms of assembly, interacts with FLNA (via filamin repeat 21); increases PKA-mediated phosphorylation of FLNA. In terms of processing, palmitoylated. Palmitoylation by ZDHHC21 may increase the expression of the receptor and regulate downstream signaling.

Its subcellular location is the cell membrane. Its function is as follows. This alpha-adrenergic receptor mediates its effect through the influx of extracellular calcium. This Mus musculus (Mouse) protein is Alpha-1D adrenergic receptor (Adra1d).